The sequence spans 272 residues: Putative phosphoenolpyruvate synthase regulatory protein (272 aa).

Residue 152 to 159 (GVSRCGKT) participates in ADP binding.

Belongs to the pyruvate, phosphate/water dikinase regulatory protein family. PSRP subfamily.

The catalysed reaction is [pyruvate, water dikinase] + ADP = [pyruvate, water dikinase]-phosphate + AMP + H(+). The enzyme catalyses [pyruvate, water dikinase]-phosphate + phosphate + H(+) = [pyruvate, water dikinase] + diphosphate. Functionally, bifunctional serine/threonine kinase and phosphorylase involved in the regulation of the phosphoenolpyruvate synthase (PEPS) by catalyzing its phosphorylation/dephosphorylation. In Pseudomonas fluorescens (strain ATCC BAA-477 / NRRL B-23932 / Pf-5), this protein is Putative phosphoenolpyruvate synthase regulatory protein.